We begin with the raw amino-acid sequence, 569 residues long: Urease subunit alpha (569 aa).

The Urease domain maps to 131 to 569; sequence GGIDTHIHFI…LPMAQRYFLL (439 aa). H136, H138, and K219 together coordinate Ni(2+). K219 is modified (N6-carboxylysine). H221 contributes to the substrate binding site. 2 residues coordinate Ni(2+): H248 and H274. H322 serves as the catalytic Proton donor. D362 is a Ni(2+) binding site.

This sequence belongs to the metallo-dependent hydrolases superfamily. Urease alpha subunit family. Heterotrimer of UreA (gamma), UreB (beta) and UreC (alpha) subunits. Three heterotrimers associate to form the active enzyme. It depends on Ni cation as a cofactor. Post-translationally, carboxylation allows a single lysine to coordinate two nickel ions.

The protein localises to the cytoplasm. The catalysed reaction is urea + 2 H2O + H(+) = hydrogencarbonate + 2 NH4(+). It functions in the pathway nitrogen metabolism; urea degradation; CO(2) and NH(3) from urea (urease route): step 1/1. The chain is Urease subunit alpha from Synechococcus sp. (strain RCC307).